Reading from the N-terminus, the 229-residue chain is Orotidine 5'-phosphate decarboxylase (229 aa).

Residues Asp9, Lys31, 58–67 (DLKLFDIPNT), Thr121, Arg179, Gln188, Gly208, and Arg209 each bind substrate. Lys60 functions as the Proton donor in the catalytic mechanism.

Belongs to the OMP decarboxylase family. Type 1 subfamily. In terms of assembly, homodimer.

The catalysed reaction is orotidine 5'-phosphate + H(+) = UMP + CO2. It functions in the pathway pyrimidine metabolism; UMP biosynthesis via de novo pathway; UMP from orotate: step 2/2. Functionally, catalyzes the decarboxylation of orotidine 5'-monophosphate (OMP) to uridine 5'-monophosphate (UMP). This Lawsonia intracellularis (strain PHE/MN1-00) protein is Orotidine 5'-phosphate decarboxylase.